The following is a 324-amino-acid chain: Glyoxylate/hydroxypyruvate reductase B (324 aa).

Active-site residues include R237 and E266. The active-site Proton donor is H285.

This sequence belongs to the D-isomer specific 2-hydroxyacid dehydrogenase family. GhrB subfamily. As to quaternary structure, homodimer.

Its subcellular location is the cytoplasm. It carries out the reaction glycolate + NADP(+) = glyoxylate + NADPH + H(+). It catalyses the reaction (R)-glycerate + NAD(+) = 3-hydroxypyruvate + NADH + H(+). The enzyme catalyses (R)-glycerate + NADP(+) = 3-hydroxypyruvate + NADPH + H(+). Its function is as follows. Catalyzes the NADPH-dependent reduction of glyoxylate and hydroxypyruvate into glycolate and glycerate, respectively. The sequence is that of Glyoxylate/hydroxypyruvate reductase B from Escherichia fergusonii (strain ATCC 35469 / DSM 13698 / CCUG 18766 / IAM 14443 / JCM 21226 / LMG 7866 / NBRC 102419 / NCTC 12128 / CDC 0568-73).